The chain runs to 315 residues: MVLLLNPLENLKTYISNRPPLVIFMVSVSAVAIAFLTIGYFFKIKEIKSPEMTEDWNTFLLRFNEIDFCISENETLKHGLNESITPESTVTSSQTRSSTQSPPLLEDPGPINISVAITLTLDPLRPFGGYSRNITHLYASVLGQQVGLAGREAHEEMNITFTLPVAWNSDECVLHGRCEQMVFSTCMTVTAASNVFPVTMQPPHCVPETYSNATSWYKIFTTARDSDTKYTQEYNPFWCYKGAIGKVYHTLNPKLTVIVPDDDRSLINLHLMHTSYFLFVMVITMFCYAVIKGRPGKVRQNNPDFCQEKVALSAG.

The chain crosses the membrane as a helical span at residues 22 to 42; the sequence is VIFMVSVSAVAIAFLTIGYFF. Positions 81 to 107 are disordered; that stretch reads NESITPESTVTSSQTRSSTQSPPLLED. Residues 88–101 are compositionally biased toward low complexity; that stretch reads STVTSSQTRSSTQS. The helical transmembrane segment at 271–291 threads the bilayer; that stretch reads LMHTSYFLFVMVITMFCYAVI.

It belongs to the TMEM248 family.

It is found in the membrane. This Danio rerio (Zebrafish) protein is Transmembrane protein 248 (tmem248).